A 401-amino-acid chain; its full sequence is LysM domain-containing GPI-anchored protein LYP4 (401 aa).

The first 23 residues, 1 to 23 (MPPPLLLLLLLAAAAAAVAPARS), serve as a signal peptide directing secretion. 4 cysteine pairs are disulfide-bonded: cysteine 30-cysteine 96, cysteine 36-cysteine 162, cysteine 94-cysteine 160, and cysteine 96-cysteine 162. 2 LysM domains span residues 106–156 (VRYV…TLFV) and 175–218 (LTYV…IIVV). 2 disulfides stabilise this stretch: cysteine 223–cysteine 255 and cysteine 250–cysteine 279. Residue asparagine 240 is glycosylated (N-linked (GlcNAc...) asparagine). N-linked (GlcNAc...) asparagine glycosylation is found at asparagine 281, asparagine 288, and asparagine 310. Serine 373 carries the GPI-anchor amidated serine lipid modification. Residues 374-401 (SGPPPAGRHVVGDVLGAFALCLVGNLLW) constitute a propeptide, removed in mature form.

Interacts with LYP6. Interacts with CEBIP. Interacts with CERK1. Expressed in roots and leaves.

The protein localises to the cell membrane. In terms of biological role, functions in innate immunity. Functions as a pattern recognition receptor (PRR), sensing bacterial peptidoglycan (PGN) and fungal chitin at the cell surface. Involved in resistance against the bacterial pathogen Xanthomonas oryzae pv. oryzae (Xoo) and the fungal pathogen Magnaporthe oryzae. Binds PGN and fungal chitin in vitro. Involved in microbe-associated molecular patterns (MAMPs) perception and participates in the activation of defense genes against the bacterial pathogen Xanthomonas oryzae pv. oryzicola (Xoc) or the fungal pathogen Magnaporthe oryzae. The sequence is that of LysM domain-containing GPI-anchored protein LYP4 from Oryza sativa subsp. japonica (Rice).